A 663-amino-acid chain; its full sequence is 72 kDa type IV collagenase (663 aa).

The signal sequence occupies residues 1–26; it reads MKTHSVFGFFFKVLLIQVYLFNKTLA. Residues 27 to 106 constitute a propeptide, activation peptide; the sequence is APSPIIKFPG…PRCGNPDVAN (80 aa). The short motif at 97-104 is the Cysteine switch element; that stretch reads PRCGNPDV. Cys-99 contributes to the Zn(2+) binding site. The tract at residues 107 to 218 is collagenase-like 1; that stretch reads YNFFPRKPKW…LWTLGEGQVV (112 aa). The Ca(2+) site is built by Asp-131 and Asp-165. Zn(2+) contacts are provided by His-175 and Asp-177. Ca(2+) is bound by residues Asp-182 and Gly-183. His-190 is a Zn(2+) binding site. Ca(2+) is bound by residues Gly-197, Gly-199, and Asp-201. Residue His-203 coordinates Zn(2+). Ca(2+)-binding residues include Asp-205, Asp-206, and Glu-208. Residues 219–393 are collagen-binding; it reads RVKYGNADGE…WGFCPDQGYS (175 aa). 3 Fibronectin type-II domains span residues 225–273, 283–331, and 341–389; these read ADGE…FCPH, GDGQ…FCPE, and SEGA…FCPD. Intrachain disulfides connect Cys-230/Cys-256, Cys-244/Cys-271, Cys-288/Cys-314, Cys-302/Cys-329, Cys-346/Cys-372, and Cys-360/Cys-387. A collagenase-like 2 region spans residues 394–468; that stretch reads LFLVAAHEFG…GPRPTLGPVT (75 aa). Residue His-400 participates in Zn(2+) binding. The active site involves Glu-401. Positions 404 and 410 each coordinate Zn(2+). A disordered region spans residues 445–464; that stretch reads SPDVEPGPGPGPGPGPRPTL. Pro residues predominate over residues 449–463; it reads EPGPGPGPGPGPRPT. Cysteines 472 and 663 form a disulfide. Hemopexin repeat units follow at residues 475–519, 520–566, 568–616, and 617–663; these read DIVF…WPDL, PEKI…GLPP, VQRI…WNGV, and PDNL…WLGC. Residues Asp-479, Asp-524, Asp-572, and Asp-621 each coordinate Ca(2+).

Belongs to the peptidase M10A family. Ligand for integrin alpha-V/beta-3. The cofactor is Ca(2+). Zn(2+) is required as a cofactor. In terms of processing, the propeptide is processed by MMP14 (MT-MMP1) and MMP16 (MT-MMP3). As to expression, produced by normal skin fibroblasts.

The protein localises to the secreted. It localises to the extracellular space. Its subcellular location is the extracellular matrix. It carries out the reaction Cleavage of gelatin type I and collagen types IV, V, VII, X. Cleaves the collagen-like sequence Pro-Gln-Gly-|-Ile-Ala-Gly-Gln.. This is 72 kDa type IV collagenase (MMP2) from Gallus gallus (Chicken).